Here is a 386-residue protein sequence, read N- to C-terminus: Succinate--CoA ligase [ADP-forming] subunit beta (386 aa).

One can recognise an ATP-grasp domain in the interval 9–244; that stretch reads KEILRNFGVP…LDEEDPAEVE (236 aa). ATP is bound by residues K46, 53–55, E99, A102, and E107; that span reads GRG. Mg(2+) is bound by residues N199 and D213. Residues N264 and 321 to 323 each bind substrate; that span reads GIM.

The protein belongs to the succinate/malate CoA ligase beta subunit family. As to quaternary structure, heterotetramer of two alpha and two beta subunits. The cofactor is Mg(2+).

The catalysed reaction is succinate + ATP + CoA = succinyl-CoA + ADP + phosphate. The enzyme catalyses GTP + succinate + CoA = succinyl-CoA + GDP + phosphate. It participates in carbohydrate metabolism; tricarboxylic acid cycle; succinate from succinyl-CoA (ligase route): step 1/1. Its function is as follows. Succinyl-CoA synthetase functions in the citric acid cycle (TCA), coupling the hydrolysis of succinyl-CoA to the synthesis of either ATP or GTP and thus represents the only step of substrate-level phosphorylation in the TCA. The beta subunit provides nucleotide specificity of the enzyme and binds the substrate succinate, while the binding sites for coenzyme A and phosphate are found in the alpha subunit. This Polaromonas sp. (strain JS666 / ATCC BAA-500) protein is Succinate--CoA ligase [ADP-forming] subunit beta.